We begin with the raw amino-acid sequence, 303 residues long: Glutathione transport system permease protein GsiD (303 aa).

6 helical membrane-spanning segments follow: residues 40–60 (AMTA…ARWI), 105–125 (LAAG…LGLL), 144–164 (LFAF…GSGI), 165–185 (ANVI…LVRG), 222–242 (IVVF…SLSF), and 266–286 (VIAP…VLAF). Residues 101-290 (AQISLAAGVF…LTVLAFNLLG (190 aa)) form the ABC transmembrane type-1 domain.

The protein belongs to the binding-protein-dependent transport system permease family. In terms of assembly, the complex is composed of two ATP-binding proteins (GsiA), two transmembrane proteins (GsiC and GsiD) and a solute-binding protein (GsiB).

The protein localises to the cell inner membrane. Functionally, part of the ABC transporter complex GsiABCD involved in glutathione import. Probably responsible for the translocation of the substrate across the membrane. The polypeptide is Glutathione transport system permease protein GsiD (Shigella flexneri serotype 5b (strain 8401)).